The chain runs to 252 residues: Imidazole glycerol phosphate synthase subunit HisF (252 aa).

Residues Asp-11 and Asp-130 contribute to the active site.

This sequence belongs to the HisA/HisF family. In terms of assembly, heterodimer of HisH and HisF.

Its subcellular location is the cytoplasm. The catalysed reaction is 5-[(5-phospho-1-deoxy-D-ribulos-1-ylimino)methylamino]-1-(5-phospho-beta-D-ribosyl)imidazole-4-carboxamide + L-glutamine = D-erythro-1-(imidazol-4-yl)glycerol 3-phosphate + 5-amino-1-(5-phospho-beta-D-ribosyl)imidazole-4-carboxamide + L-glutamate + H(+). The protein operates within amino-acid biosynthesis; L-histidine biosynthesis; L-histidine from 5-phospho-alpha-D-ribose 1-diphosphate: step 5/9. Functionally, IGPS catalyzes the conversion of PRFAR and glutamine to IGP, AICAR and glutamate. The HisF subunit catalyzes the cyclization activity that produces IGP and AICAR from PRFAR using the ammonia provided by the HisH subunit. In Moorella thermoacetica (strain ATCC 39073 / JCM 9320), this protein is Imidazole glycerol phosphate synthase subunit HisF.